Consider the following 256-residue polypeptide: Ubiquinone/menaquinone biosynthesis C-methyltransferase UbiE (256 aa).

Residues T79, D100, and 128–129 each bind S-adenosyl-L-methionine; that span reads DA.

Belongs to the class I-like SAM-binding methyltransferase superfamily. MenG/UbiE family.

The enzyme catalyses a 2-demethylmenaquinol + S-adenosyl-L-methionine = a menaquinol + S-adenosyl-L-homocysteine + H(+). It catalyses the reaction a 2-methoxy-6-(all-trans-polyprenyl)benzene-1,4-diol + S-adenosyl-L-methionine = a 5-methoxy-2-methyl-3-(all-trans-polyprenyl)benzene-1,4-diol + S-adenosyl-L-homocysteine + H(+). It functions in the pathway quinol/quinone metabolism; menaquinone biosynthesis; menaquinol from 1,4-dihydroxy-2-naphthoate: step 2/2. It participates in cofactor biosynthesis; ubiquinone biosynthesis. Functionally, methyltransferase required for the conversion of demethylmenaquinol (DMKH2) to menaquinol (MKH2) and the conversion of 2-polyprenyl-6-methoxy-1,4-benzoquinol (DDMQH2) to 2-polyprenyl-3-methyl-6-methoxy-1,4-benzoquinol (DMQH2). The sequence is that of Ubiquinone/menaquinone biosynthesis C-methyltransferase UbiE from Pseudomonas savastanoi pv. phaseolicola (strain 1448A / Race 6) (Pseudomonas syringae pv. phaseolicola (strain 1448A / Race 6)).